The chain runs to 274 residues: 3-methyl-2-oxobutanoate hydroxymethyltransferase (274 aa).

Residues Asp-46 and Asp-85 each coordinate Mg(2+). Residues 46-47 (DS), Asp-85, and Lys-114 contribute to the 3-methyl-2-oxobutanoate site. Glu-116 contacts Mg(2+). Glu-183 (proton acceptor) is an active-site residue.

Belongs to the PanB family. Homodecamer; pentamer of dimers. Mg(2+) is required as a cofactor.

It localises to the cytoplasm. It carries out the reaction 3-methyl-2-oxobutanoate + (6R)-5,10-methylene-5,6,7,8-tetrahydrofolate + H2O = 2-dehydropantoate + (6S)-5,6,7,8-tetrahydrofolate. It functions in the pathway cofactor biosynthesis; coenzyme A biosynthesis. In terms of biological role, catalyzes the reversible reaction in which hydroxymethyl group from 5,10-methylenetetrahydrofolate is transferred onto alpha-ketoisovalerate to form ketopantoate. The chain is 3-methyl-2-oxobutanoate hydroxymethyltransferase from Aeropyrum pernix (strain ATCC 700893 / DSM 11879 / JCM 9820 / NBRC 100138 / K1).